Reading from the N-terminus, the 1017-residue chain is Formin-binding protein 4 (1017 aa).

Disordered regions lie at residues 1–141 (MGKK…STDI) and 160–202 (PAAP…TSGW). Serine 18 bears the Phosphoserine mark. Low complexity predominate over residues 40–69 (DSTAAVPSQPAPSAATTTTTAVTAAAASDD). Residues serine 116 and serine 124 each carry the phosphoserine modification. A compositionally biased stretch (polar residues) spans 130–141 (SKETNGNQSTDI). Threonine 172 is subject to Phosphothreonine. Residues 181–200 (AATSTLSSSTSNGTDSTQTS) are compositionally biased toward low complexity. The 35-residue stretch at 214 to 248 (GIEMGDWQEVWDENTGCYYYWNTQTNEVTWELPQY) folds into the WW 1 domain. Lysine 290 is subject to N6-acetyllysine. Lysine 301 is covalently cross-linked (Glycyl lysine isopeptide (Lys-Gly) (interchain with G-Cter in SUMO1)). A Glycyl lysine isopeptide (Lys-Gly) (interchain with G-Cter in SUMO2) cross-link involves residue lysine 335. Lysine 348 is covalently cross-linked (Glycyl lysine isopeptide (Lys-Gly) (interchain with G-Cter in SUMO1); alternate). Lysine 348 is covalently cross-linked (Glycyl lysine isopeptide (Lys-Gly) (interchain with G-Cter in SUMO2); alternate). Disordered stretches follow at residues 421–519 (LEEG…TTPK), 621–676 (ESQW…CKES), 706–792 (PLPL…IKRK), and 899–994 (TATI…AERN). Phosphoserine occurs at positions 427, 432, 435, 438, and 442. Positions 428-442 (VSGSSPRSDISQPAS) are enriched in polar residues. Residues 449–458 (LMSKRGKWKM) are compositionally biased toward basic residues. Low complexity predominate over residues 461 to 474 (RATSPESTSRSSSK). A Phosphoserine modification is found at serine 464. At threonine 479 the chain carries Phosphothreonine. Over residues 491–513 (NSEKIDENSDKEMEVEESPEKIK) the composition is skewed to basic and acidic residues. 2 positions are modified to phosphoserine: serine 499 and serine 508. A phosphothreonine mark is found at threonine 516 and threonine 517. Lysine 519 is covalently cross-linked (Glycyl lysine isopeptide (Lys-Gly) (interchain with G-Cter in SUMO1); alternate). Lysine 519 is covalently cross-linked (Glycyl lysine isopeptide (Lys-Gly) (interchain with G-Cter in SUMO2); alternate). Residues 595–629 (NATPKGWSCHWDRDHRRYFYVNEQSGESQWEFPDG) enclose the WW 2 domain. Acidic residues predominate over residues 627–637 (PDGEEEEEESQ). Residues 640–656 (ENRDETLAKQTLKDKTG) show a composition bias toward basic and acidic residues. Residues 657–671 (TDSNSTESSETSTGS) are compositionally biased toward low complexity. Over residues 706-732 (PLPLEMPPPPPPPPESPPPPPPPPPPA) the composition is skewed to pro residues. Residues 733-748 (EDGEIQEVEMEDEGSE) are compositionally biased toward acidic residues. Positions 764 to 786 (SAQTTVVTSQSSVDSTISSSSST) are enriched in low complexity. A compositionally biased stretch (pro residues) spans 904–925 (EPPPPPPPPPPPPPPAPKMPPP). The segment covering 929 to 941 (KKGRKDKAKKSKT) has biased composition (basic residues). Residues 957 to 970 (LDEEDNSSSSEEDR) show a composition bias toward acidic residues. Serine 963, serine 964, and serine 965 each carry phosphoserine. Basic and acidic residues predominate over residues 971–982 (ESTAQKRIEEWK).

As to quaternary structure, binds FMN1. Interacts with the Arg/Gly-rich-flanked Pro-rich of KHDRBS1/SAM68. Arginine methylation in these regions has no effect on this binding. In terms of tissue distribution, highly expressed in the eye.

The polypeptide is Formin-binding protein 4 (FNBP4) (Homo sapiens (Human)).